The chain runs to 809 residues: Phospholipase D alpha 1 (809 aa).

One can recognise a C2 domain in the interval 1 to 125 (MAQILLHGTL…LDGHEIDKWV (125 aa)). Aspartate 186 contacts Ca(2+). One can recognise a PLD phosphodiesterase 1 domain in the interval 326 to 365 (TMFTHHQKIVVVDSALPGGGGSDKRRIVSFVGGLDLCDGR). Residues histidine 331, lysine 333, and aspartate 338 contribute to the active site. Histidine 331 provides a ligand contact to a 1,2-diacyl-sn-glycero-3-phosphate. Ca(2+) contacts are provided by histidine 371 and histidine 405. A 1,2-diacyl-sn-glycero-3-phosphate contacts are provided by glutamine 521 and histidine 660. A PLD phosphodiesterase 2 domain is found at 655–682 (FMIYVHTKMMIVDDEYIIIGSANINQRS). Catalysis depends on residues histidine 660, lysine 662, and aspartate 667. Glutamate 721 provides a ligand contact to Ca(2+).

Belongs to the phospholipase D family. C2-PLD subfamily. Ca(2+) serves as cofactor.

The enzyme catalyses a 1,2-diacyl-sn-glycero-3-phosphocholine + H2O = a 1,2-diacyl-sn-glycero-3-phosphate + choline + H(+). Hydrolyzes glycerol-phospholipids at the terminal phosphodiesteric bond. Plays an important role in various cellular processes. In Vigna unguiculata (Cowpea), this protein is Phospholipase D alpha 1 (PLD1).